The primary structure comprises 277 residues: NH(3)-dependent NAD(+) synthetase (277 aa).

Gly-46–Ser-53 is an ATP binding site. Asp-52 lines the Mg(2+) pocket. A deamido-NAD(+)-binding site is contributed by Arg-141. An ATP-binding site is contributed by Thr-161. Glu-166 contacts Mg(2+). 2 residues coordinate deamido-NAD(+): Lys-174 and Asp-181. The ATP site is built by Lys-190 and Thr-212. His-262–Lys-263 contributes to the deamido-NAD(+) binding site.

The protein belongs to the NAD synthetase family. In terms of assembly, homodimer.

It catalyses the reaction deamido-NAD(+) + NH4(+) + ATP = AMP + diphosphate + NAD(+) + H(+). It participates in cofactor biosynthesis; NAD(+) biosynthesis; NAD(+) from deamido-NAD(+) (ammonia route): step 1/1. Catalyzes the ATP-dependent amidation of deamido-NAD to form NAD. Uses ammonia as a nitrogen source. The sequence is that of NH(3)-dependent NAD(+) synthetase from Corynebacterium efficiens (strain DSM 44549 / YS-314 / AJ 12310 / JCM 11189 / NBRC 100395).